A 260-amino-acid chain; its full sequence is Thiazole synthase (260 aa).

The Schiff-base intermediate with DXP role is filled by Lys-96. Residues Gly-157, 184-185 (AG), and 206-207 (NT) each bind 1-deoxy-D-xylulose 5-phosphate.

This sequence belongs to the ThiG family. Homotetramer. Forms heterodimers with either ThiH or ThiS.

The protein resides in the cytoplasm. It catalyses the reaction [ThiS sulfur-carrier protein]-C-terminal-Gly-aminoethanethioate + 2-iminoacetate + 1-deoxy-D-xylulose 5-phosphate = [ThiS sulfur-carrier protein]-C-terminal Gly-Gly + 2-[(2R,5Z)-2-carboxy-4-methylthiazol-5(2H)-ylidene]ethyl phosphate + 2 H2O + H(+). It functions in the pathway cofactor biosynthesis; thiamine diphosphate biosynthesis. Its function is as follows. Catalyzes the rearrangement of 1-deoxy-D-xylulose 5-phosphate (DXP) to produce the thiazole phosphate moiety of thiamine. Sulfur is provided by the thiocarboxylate moiety of the carrier protein ThiS. In vitro, sulfur can be provided by H(2)S. This chain is Thiazole synthase, found in Rhodopseudomonas palustris (strain ATCC BAA-98 / CGA009).